A 227-amino-acid polypeptide reads, in one-letter code: Small ribosomal subunit protein uS3 (227 aa).

The region spanning 38-106 (LRKFIKDRFY…NVNINIQEIR (69 aa)) is the KH type-2 domain.

Belongs to the universal ribosomal protein uS3 family. As to quaternary structure, part of the 30S ribosomal subunit. Forms a tight complex with proteins S10 and S14.

Its function is as follows. Binds the lower part of the 30S subunit head. Binds mRNA in the 70S ribosome, positioning it for translation. The sequence is that of Small ribosomal subunit protein uS3 from Syntrophomonas wolfei subsp. wolfei (strain DSM 2245B / Goettingen).